Consider the following 530-residue polypeptide: AarF domain-containing protein kinase 1 (530 aa).

The region spanning 155 to 467 is the Protein kinase domain; sequence SFDDTPLGTA…ASSFLNMSRC (313 aa). ATP contacts are provided by residues 161 to 169 and K183; that span reads LGTASLAQV. The active-site Proton acceptor is the D315.

Belongs to the protein kinase superfamily. ADCK protein kinase family.

It is found in the mitochondrion. In terms of biological role, appears to be essential for maintaining mitochondrial cristae formation and mitochondrial function by acting via YME1L1 in a kinase-independent manner to regulate essential mitochondrial structural proteins OPA1 and IMMT. The action of this enzyme is not yet clear. It is not known if it has protein kinase activity and what type of substrate it would phosphorylate (Ser, Thr or Tyr). In Homo sapiens (Human), this protein is AarF domain-containing protein kinase 1.